Reading from the N-terminus, the 309-residue chain is Genome polyprotein (309 aa).

The Cytoplasmic portion of the chain corresponds to 1-40 (GFADLMGYIPLVGAPLGGAARALAHGVRVLEDGVNYATGN). Positions 36–39 (YATG) are important for lipid droplets localization. The helical transmembrane segment at 41 to 61 (LPGCSFSIFLLALLSCLTVPA) threads the bilayer. Positions 50–63 (LLALLSCLTVPASA) are cleaved as a propeptide — ER anchor for the core protein, removed in mature form by host signal peptidase. Topologically, residues 62–230 (SAYQVRNSSG…AGAHWGVLAG (169 aa)) are lumenal. N-linked (GlcNAc...) asparagine; by host glycans are attached at residues N68, N81, and N106. Residues 137–168 (LVGSATLCSALYVGDLCGSVFLVGQLFTFSPR) are important for fusion. N177 is a glycosylation site (N-linked (GlcNAc...) asparagine; by host). The helical transmembrane segment at 231 to 251 (IAYFSMVGNWAKVLVVLLLFA) threads the bilayer. Residues 252–309 (GVDATTYTTGGNAARTTQALTSFFSPGAKQDIQLINTNGSWHINRTALNCNASLDTGW) lie on the Lumenal side of the membrane. The HVR1 stretch occupies residues 256-282 (TTYTTGGNAARTTQALTSFFSPGAKQD). 3 N-linked (GlcNAc...) (high mannose) asparagine; by host glycosylation sites follow: N289, N295, and N302.

Belongs to the hepacivirus polyprotein family. Homooligomer. Interacts with E1 (via C-terminus). Interacts with the non-structural protein 5A. Interacts (via N-terminus) with host STAT1 (via SH2 domain); this interaction results in decreased STAT1 phosphorylation and ubiquitin-mediated proteasome-dependent STAT1 degradation, leading to decreased IFN-stimulated gene transcription. Interacts with host STAT3; this interaction constitutively activates STAT3. Interacts with host LTBR receptor. Interacts with host TNFRSF1A receptor and possibly induces apoptosis. Interacts with host HNRPK. Interacts with host YWHAE. Interacts with host UBE3A/E6AP. Interacts with host DDX3X. Interacts with host APOA2. Interacts with host RXRA protein. Interacts with host SP110 isoform 3/Sp110b; this interaction sequesters the transcriptional corepressor SP110 away from the nucleus. Interacts with host CREB3 nuclear transcription protein; this interaction triggers cell transformation. Interacts with host ACY3. Interacts with host C1QR1. Interacts with host RBM24; this interaction, which enhances the interaction of the mature core protein with 5'-UTR, may inhibit viral translation and favor replication. Interacts with host EIF2AK2/PKR; this interaction induces the autophosphorylation of EIF2AK2. Part of the viral assembly initiation complex composed of NS2, E1, E2, NS3, NS4A, NS5A and the mature core protein. In terms of assembly, forms a heterodimer with envelope glycoprotein E2. Interacts with mature core protein. Interacts with protease NS2. The heterodimer E1/E2 interacts with host CLDN1; this interaction plays a role in viral entry into host cell. Interacts with host SPSB2 (via C-terminus). Part of the viral assembly initiation complex composed of NS2, E1, E2, NS3, NS4A, NS5A and the mature core protein. As to quaternary structure, forms a heterodimer with envelope glycoprotein E1. Interacts with host CD81 and SCARB1 receptors; these interactions play a role in viral entry into host cell. Interacts with host EIF2AK2/PKR; this interaction inhibits EIF2AK2 and probably allows the virus to evade the innate immune response. Interacts with host CD209/DC-SIGN and CLEC4M/DC-SIGNR. Interact with host SPCS1; this interaction is essential for viral particle assembly. Interacts with protease NS2. The heterodimer E1/E2 interacts with host CLDN1; this interaction plays a role in viral entry into host cell. Part of the viral assembly initiation complex composed of NS2, E1, E2, NS3, NS4A, NS5A and the mature core protein. Specific enzymatic cleavages in vivo yield mature proteins. The structural proteins, core, E1, E2 and p7 are produced by proteolytic processing by host signal peptidases. The core protein precursor is synthesized as a 23 kDa, which is retained in the ER membrane through the hydrophobic signal peptide. Cleavage by the signal peptidase releases the 21 kDa mature core protein. The cleavage of the core protein precursor occurs between aminoacids 176 and 188 but the exact cleavage site is not known. Some degraded forms of the core protein appear as well during the course of infection. The other proteins (p7, NS2, NS3, NS4A, NS4B, NS5A and NS5B) are cleaved by the viral proteases. Autoprocessing between NS2 and NS3 is mediated by the NS2 cysteine protease catalytic domain and regulated by the NS3 N-terminal domain. Post-translationally, phosphorylated by host PKC and PKA. In terms of processing, ubiquitinated; mediated by UBE3A and leading to core protein subsequent proteasomal degradation. Highly N-glycosylated.

Its subcellular location is the host endoplasmic reticulum membrane. It is found in the host mitochondrion membrane. The protein localises to the virion. It localises to the host cytoplasm. The protein resides in the host nucleus. Its subcellular location is the host lipid droplet. It is found in the virion membrane. Its function is as follows. Packages viral RNA to form a viral nucleocapsid, and promotes virion budding. Participates in the viral particle production as a result of its interaction with the non-structural protein 5A. Binds RNA and may function as a RNA chaperone to induce the RNA structural rearrangements taking place during virus replication. Modulates viral translation initiation by interacting with viral IRES and 40S ribosomal subunit. Affects various cell signaling pathways, host immunity and lipid metabolism. Prevents the establishment of cellular antiviral state by blocking the interferon-alpha/beta (IFN-alpha/beta) and IFN-gamma signaling pathways and by blocking the formation of phosphorylated STAT1 and promoting ubiquitin-mediated proteasome-dependent degradation of STAT1. Activates STAT3 leading to cellular transformation. Regulates the activity of cellular genes, including c-myc and c-fos. May repress the promoter of p53, and sequester CREB3 and SP110 isoform 3/Sp110b in the cytoplasm. Represses cell cycle negative regulating factor CDKN1A, thereby interrupting an important check point of normal cell cycle regulation. Targets transcription factors involved in the regulation of inflammatory responses and in the immune response: suppresses TNF-induced NF-kappa-B activation, and activates AP-1. Binds to dendritic cells (DCs) via C1QR1, resulting in down-regulation of T-lymphocytes proliferation. Alters lipid metabolism by interacting with hepatocellular proteins involved in lipid accumulation and storage. Induces up-regulation of FAS promoter activity, and thereby contributes to the increased triglyceride accumulation in hepatocytes (steatosis). Forms a heterodimer with envelope glycoprotein E2, which mediates virus attachment to the host cell, virion internalization through clathrin-dependent endocytosis and fusion with host membrane. Fusion with the host cell is most likely mediated by both E1 and E2, through conformational rearrangements of the heterodimer required for fusion rather than a classical class II fusion mechanism. E1/E2 heterodimer binds host apolipoproteins such as APOB and ApoE thereby forming a lipo-viro-particle (LVP). APOE associated to the LVP allows the initial virus attachment to cell surface receptors such as the heparan sulfate proteoglycans (HSPGs), syndecan-1 (SDC1), syndecan-1 (SDC2), the low-density lipoprotein receptor (LDLR) and scavenger receptor class B type I (SCARB1). The cholesterol transfer activity of SCARB1 allows E2 exposure and binding of E2 to SCARB1 and the tetraspanin CD81. E1/E2 heterodimer binding on CD81 activates the epithelial growth factor receptor (EGFR) signaling pathway. Diffusion of the complex E1-E2-EGFR-SCARB1-CD81 to the cell lateral membrane allows further interaction with Claudin 1 (CLDN1) and occludin (OCLN) to finally trigger HCV entry. Functionally, forms a heterodimer with envelope glycoprotein E1, which mediates virus attachment to the host cell, virion internalization through clathrin-dependent endocytosis and fusion with host membrane. Fusion with the host cell is most likely mediated by both E1 and E2, through conformational rearrangements of the heterodimer required for fusion rather than a classical class II fusion mechanism. The interaction between envelope glycoprotein E2 and host apolipoprotein E/APOE allows the proper assembly, maturation and infectivity of the viral particles. This interaction is probably promoted via the up-regulation of cellular autophagy by the virus. E1/E2 heterodimer binds host apolipoproteins such as APOB and APOE thereby forming a lipo-viro-particle (LVP). APOE associated to the LVP allows the initial virus attachment to cell surface receptors such as the heparan sulfate proteoglycans (HSPGs), syndecan-1 (SDC1), syndecan-1 (SDC2), the low-density lipoprotein receptor (LDLR) and scavenger receptor class B type I (SCARB1). The cholesterol transfer activity of SCARB1 allows E2 exposure and binding of E2 to SCARB1 and the tetraspanin CD81. E1/E2 heterodimer binding on CD81 activates the epithelial growth factor receptor (EGFR) signaling pathway. Diffusion of the complex E1-E2-EGFR-SCARB1-CD81 to the cell lateral membrane allows further interaction with Claudin 1 (CLDN1) and occludin (OCLN) to finally trigger HCV entry. Inhibits host EIF2AK2/PKR activation, preventing the establishment of an antiviral state. Viral ligand for CD209/DC-SIGN and CLEC4M/DC-SIGNR, which are respectively found on dendritic cells (DCs), and on liver sinusoidal endothelial cells and macrophage-like cells of lymph node sinuses. These interactions allow the capture of circulating HCV particles by these cells and subsequent facilitated transmission to permissive cells such as hepatocytes and lymphocyte subpopulations. The protein is Genome polyprotein of Hepatitis C virus (isolate HCT27) (HCV).